The primary structure comprises 385 residues: tRNA-specific 2-thiouridylase MnmA (385 aa).

Residues 8–15 and Leu34 contribute to the ATP site; that span reads AMSGGVDS. Cys102 acts as the Nucleophile in catalysis. Cys102 and Cys200 form a disulfide bridge. Residue Gly126 coordinates ATP. The interval 150 to 152 is interaction with tRNA; it reads KDQ. The active-site Cysteine persulfide intermediate is Cys200. An interaction with tRNA region spans residues 307-308; that stretch reads RY.

This sequence belongs to the MnmA/TRMU family.

Its subcellular location is the cytoplasm. The enzyme catalyses S-sulfanyl-L-cysteinyl-[protein] + uridine(34) in tRNA + AH2 + ATP = 2-thiouridine(34) in tRNA + L-cysteinyl-[protein] + A + AMP + diphosphate + H(+). Its function is as follows. Catalyzes the 2-thiolation of uridine at the wobble position (U34) of tRNA, leading to the formation of s(2)U34. In Heliobacterium modesticaldum (strain ATCC 51547 / Ice1), this protein is tRNA-specific 2-thiouridylase MnmA.